The following is a 480-amino-acid chain: Ribulose bisphosphate carboxylase large chain (480 aa).

Positions Met-1–Ser-2 are excised as a propeptide. The residue at position 3 (Pro-3) is an N-acetylproline. Lys-14 carries the post-translational modification N6,N6,N6-trimethyllysine. Substrate-binding residues include Asn-123 and Thr-173. The Proton acceptor role is filled by Lys-175. Lys-177 is a binding site for substrate. Mg(2+)-binding residues include Lys-201, Asp-203, and Glu-204. Position 201 is an N6-carboxylysine (Lys-201). The Proton acceptor role is filled by His-294. Residues Arg-295, His-327, and Ser-379 each coordinate substrate.

Belongs to the RuBisCO large chain family. Type I subfamily. In terms of assembly, heterohexadecamer of 8 large chains and 8 small chains; disulfide-linked. The disulfide link is formed within the large subunit homodimers. Requires Mg(2+) as cofactor. The disulfide bond which can form in the large chain dimeric partners within the hexadecamer appears to be associated with oxidative stress and protein turnover.

The protein resides in the plastid. It localises to the chloroplast. The enzyme catalyses 2 (2R)-3-phosphoglycerate + 2 H(+) = D-ribulose 1,5-bisphosphate + CO2 + H2O. It carries out the reaction D-ribulose 1,5-bisphosphate + O2 = 2-phosphoglycolate + (2R)-3-phosphoglycerate + 2 H(+). Functionally, ruBisCO catalyzes two reactions: the carboxylation of D-ribulose 1,5-bisphosphate, the primary event in carbon dioxide fixation, as well as the oxidative fragmentation of the pentose substrate in the photorespiration process. Both reactions occur simultaneously and in competition at the same active site. This chain is Ribulose bisphosphate carboxylase large chain, found in Phalaenopsis aphrodite subsp. formosana (Moth orchid).